The following is a 165-amino-acid chain: Endoribonuclease YbeY (165 aa).

Zn(2+) contacts are provided by histidine 126, histidine 130, and histidine 136.

The protein belongs to the endoribonuclease YbeY family. Requires Zn(2+) as cofactor.

The protein localises to the cytoplasm. Single strand-specific metallo-endoribonuclease involved in late-stage 70S ribosome quality control and in maturation of the 3' terminus of the 16S rRNA. The polypeptide is Endoribonuclease YbeY (Ruegeria pomeroyi (strain ATCC 700808 / DSM 15171 / DSS-3) (Silicibacter pomeroyi)).